Reading from the N-terminus, the 564-residue chain is Protein NRT1/ PTR FAMILY 5.16 (564 aa).

The next 2 helical transmembrane spans lie at 49 to 69 and 80 to 100; these read FAYF…LGQS and WSGT…AYLG. A Phosphothreonine modification is found at Thr104. Transmembrane regions (helical) follow at residues 110–130, 145–165, 192–212, 220–240, 327–347, 358–378, 408–428, 450–470, 486–506, and 533–553; these read LIYI…LMGL, FFWV…GQGG, FFNW…IVVV, WALG…LFLF, IPIW…ATFF, ILPG…LSIF, IGAG…VEMK, IWWF…SLVG, IGLA…GFLI, and YFYW…LLLS.

It belongs to the major facilitator superfamily. Proton-dependent oligopeptide transporter (POT/PTR) (TC 2.A.17) family. In terms of tissue distribution, expressed in shoots and roots.

It is found in the membrane. The chain is Protein NRT1/ PTR FAMILY 5.16 (NPF5.16) from Arabidopsis thaliana (Mouse-ear cress).